We begin with the raw amino-acid sequence, 319 residues long: Ferrochelatase (319 aa).

Fe cation is bound by residues histidine 193 and glutamate 274.

It belongs to the ferrochelatase family.

It is found in the cytoplasm. It catalyses the reaction heme b + 2 H(+) = protoporphyrin IX + Fe(2+). It functions in the pathway porphyrin-containing compound metabolism; protoheme biosynthesis; protoheme from protoporphyrin-IX: step 1/1. In terms of biological role, catalyzes the ferrous insertion into protoporphyrin IX. The sequence is that of Ferrochelatase from Actinobacillus pleuropneumoniae serotype 7 (strain AP76).